We begin with the raw amino-acid sequence, 357 residues long: Protein-glutamate methylesterase/protein-glutamine glutaminase 5 (357 aa).

A Response regulatory domain is found at 10-127; that stretch reads RVLVVDDSSF…IDAQKAFKEE (118 aa). The residue at position 61 (D61) is a 4-aspartylphosphate. The CheB-type methylesterase domain maps to 161–357; sequence PRPAGQRYQY…IGTEITKIAG (197 aa). Active-site residues include S176, H203, and D301.

Belongs to the CheB family. In terms of processing, phosphorylated by CheA. Phosphorylation of the N-terminal regulatory domain activates the methylesterase activity.

It is found in the cytoplasm. It catalyses the reaction [protein]-L-glutamate 5-O-methyl ester + H2O = L-glutamyl-[protein] + methanol + H(+). It carries out the reaction L-glutaminyl-[protein] + H2O = L-glutamyl-[protein] + NH4(+). Functionally, involved in chemotaxis. Part of a chemotaxis signal transduction system that modulates chemotaxis in response to various stimuli. Catalyzes the demethylation of specific methylglutamate residues introduced into the chemoreceptors (methyl-accepting chemotaxis proteins or MCP) by CheR. Also mediates the irreversible deamidation of specific glutamine residues to glutamic acid. The polypeptide is Protein-glutamate methylesterase/protein-glutamine glutaminase 5 (Geobacter metallireducens (strain ATCC 53774 / DSM 7210 / GS-15)).